We begin with the raw amino-acid sequence, 419 residues long: Squalene synthase R6 (419 aa).

A helical transmembrane segment spans residues 397 to 417 (TMYLVVLLLGILGVAAAVLMA).

Belongs to the phytoene/squalene synthase family. The cofactor is Mg(2+).

It localises to the membrane. The enzyme catalyses 2 (2E,6E)-farnesyl diphosphate + NADPH + H(+) = squalene + 2 diphosphate + NADP(+). It carries out the reaction 2 (2E,6E)-farnesyl diphosphate + NADH + H(+) = squalene + 2 diphosphate + NAD(+). It functions in the pathway terpene metabolism; lanosterol biosynthesis; lanosterol from farnesyl diphosphate: step 1/3. Squalene synthase; part of the gene cluster that mediates the biosynthesis of squalestatin S1 (SQS1, also known as zaragozic acid A), a heavily oxidized fungal polyketide that offers potent cholesterol lowering activity by targeting squalene synthase (SS). Catalyzes the condensation of 2 two farnesyl pyrophosphate moieties to form squalene. The presence of a gene encoding a squalene synthase supports the identification of the cluster as being responsible for SQS1 production and suggests a likely mechanism for self-resistance. The polypeptide is Squalene synthase R6 (Phoma sp. (strain ATCC 20986 / MF5453)).